A 449-amino-acid chain; its full sequence is Kynurenine 3-monooxygenase (449 aa).

The protein belongs to the aromatic-ring hydroxylase family. KMO subfamily. FAD is required as a cofactor.

The enzyme catalyses L-kynurenine + NADPH + O2 + H(+) = 3-hydroxy-L-kynurenine + NADP(+) + H2O. It participates in cofactor biosynthesis; NAD(+) biosynthesis; quinolinate from L-kynurenine: step 1/3. Its function is as follows. Catalyzes the hydroxylation of L-kynurenine (L-Kyn) to form 3-hydroxy-L-kynurenine (L-3OHKyn). Required for synthesis of quinolinic acid. The polypeptide is Kynurenine 3-monooxygenase (Cytophaga hutchinsonii (strain ATCC 33406 / DSM 1761 / CIP 103989 / NBRC 15051 / NCIMB 9469 / D465)).